The following is a 228-amino-acid chain: Putative elongation factor Tu-like protein (228 aa).

One can recognise a tr-type G domain in the interval 6-212 (KPHINVGTIG…LPIREKDNPF (207 aa)). The segment at 15-22 (GHVDHGKT) is G1. Positions 59-63 (GITIS) are G2. Residues 80 to 83 (DCPG) form a G3 region. The tract at residues 135–138 (NKCD) is G4. The segment at 173 to 175 (SAV) is G5.

It belongs to the TRAFAC class translation factor GTPase superfamily. Classic translation factor GTPase family. EF-Tu/EF-1A subfamily.

This Ehrlichia ruminantium (strain Welgevonden) protein is Putative elongation factor Tu-like protein.